A 355-amino-acid chain; its full sequence is UDP-N-acetylglucosamine--N-acetylmuramyl-(pentapeptide) pyrophosphoryl-undecaprenol N-acetylglucosamine transferase (355 aa).

Residues 14–16 (TGG), Asn-126, Arg-162, Ser-190, Ile-243, 262–267 (ALTVSE), and Gln-287 contribute to the UDP-N-acetyl-alpha-D-glucosamine site.

This sequence belongs to the glycosyltransferase 28 family. MurG subfamily.

Its subcellular location is the cell inner membrane. It carries out the reaction di-trans,octa-cis-undecaprenyl diphospho-N-acetyl-alpha-D-muramoyl-L-alanyl-D-glutamyl-meso-2,6-diaminopimeloyl-D-alanyl-D-alanine + UDP-N-acetyl-alpha-D-glucosamine = di-trans,octa-cis-undecaprenyl diphospho-[N-acetyl-alpha-D-glucosaminyl-(1-&gt;4)]-N-acetyl-alpha-D-muramoyl-L-alanyl-D-glutamyl-meso-2,6-diaminopimeloyl-D-alanyl-D-alanine + UDP + H(+). It functions in the pathway cell wall biogenesis; peptidoglycan biosynthesis. In terms of biological role, cell wall formation. Catalyzes the transfer of a GlcNAc subunit on undecaprenyl-pyrophosphoryl-MurNAc-pentapeptide (lipid intermediate I) to form undecaprenyl-pyrophosphoryl-MurNAc-(pentapeptide)GlcNAc (lipid intermediate II). This chain is UDP-N-acetylglucosamine--N-acetylmuramyl-(pentapeptide) pyrophosphoryl-undecaprenol N-acetylglucosamine transferase, found in Vibrio campbellii (strain ATCC BAA-1116).